The chain runs to 386 residues: Ribosomal RNA small subunit methyltransferase H (386 aa).

Residues 97 to 99, Asp-116, Tyr-143, Asp-167, and Gln-174 contribute to the S-adenosyl-L-methionine site; that span reads GGH.

Belongs to the methyltransferase superfamily. RsmH family.

The protein localises to the cytoplasm. The catalysed reaction is cytidine(1402) in 16S rRNA + S-adenosyl-L-methionine = N(4)-methylcytidine(1402) in 16S rRNA + S-adenosyl-L-homocysteine + H(+). Specifically methylates the N4 position of cytidine in position 1402 (C1402) of 16S rRNA. In Mycolicibacterium paratuberculosis (strain ATCC BAA-968 / K-10) (Mycobacterium paratuberculosis), this protein is Ribosomal RNA small subunit methyltransferase H.